The chain runs to 383 residues: Probable lipid transporter atnI (383 aa).

The next 2 membrane-spanning stretches (helical) occupy residues 46–66 (VLFSVLFGLTTIIHIVQAIMF) and 71–91 (AWVVIMSSLWELIAFIMRSLF). N94 carries N-linked (GlcNAc...) asparagine glycosylation. 5 consecutive transmembrane segments (helical) span residues 104-124 (FTIFFLLAPIWVNAFLYMTLG), 144-164 (FGHIFVWLEILAFIIQLVGAA), 182-202 (IYMGGIGVQELFILIFTGLFI), 231-251 (WLFYAIYASLFLITVRIIFRL), and 269-289 (WFEYVWDAAPIFICLAILNVA). The interval 305 to 383 (VSRKEKKQRK…YDNRGNEVRP (79 aa)) is disordered. Residues 307-316 (RKEKKQRKRE) are compositionally biased toward basic residues. Positions 317–329 (KKEAKIAEKEAKK) are enriched in basic and acidic residues.

Belongs to the lipid-translocating exporter (LTE) (TC 9.A.26.1) family.

It is found in the membrane. The protein operates within secondary metabolite biosynthesis. Functionally, probable lipid transporter; part of the gene cluster that mediates the biosynthesis of aspercryptins, linear lipopeptides built from six amino acids including 2 highly unusual and nonproteogenic amino acids, 2-amino-octanoic acid (2aoa) and 2-amino-dodecanol (2adol). The core structure of aspercryptins is as follows: Ser/Ala-Thr-Ile/Val-2aoa-Asn-2adol. The first step of aspercryptin biosynthesis is the generation of the fatty acid precursors, octanoic and dodecanoic acids, by the FAS subunits atnF and atnM. The fatty acid precursors are likely transformed into the corresponding alpha-amino fatty acids in three steps. First, they are hydroxylated by the cytochrome P450 monooxygenase atnE, then oxidized to the corresponding alpha-keto acids by the NAD(P)-dependent oxidoreductase atnD, and finally converted to the alpha-amino fatty acids by the PLP-dependent aminotransferases atnH or atnJ. the alpha-amino fatty acids, 2-amino-octanoic and 2-amino-dodecanoic acids, are recognized, activated, and covalently tethered to the NRPS atnA by its fourth and sixth adenylation domains. The second module of atnA is the Thr module and contains an epimerase (E) domain responsible for the epimerization of Thr to D-allo-Thr. Additionally, despite atnA having only one epimerase domain, the first amino acid of aspercryptin A1 is D-Ser, suggesting that serine is either loaded directly as D-Ser on the first module or that the epimerase domain in the threonine module epimerizes both L-Ser and L-Thr. After condensation of the hexapeptide of aspercryptin, the C-terminal reductase (TE) domain might be involved in the reductive release and production of the aldehyde hexapeptide. Further reduction would generate aspercryptins. The variety of aspercryptins produced reflects the flexibility of the atnA NRPS, allowing incorporation of alanine instead of serine, valine for isoleucine, and a C10 fatty amino alcohol instead of the C12 version. AtnB seems to be involved in the selectivity for Ile versus Val by the third module. Moreover, type B, C and D aspercryptins have an additional N-terminal cichorine, acetyl and propionyl group respectively. This chain is Probable lipid transporter atnI, found in Emericella nidulans (strain FGSC A4 / ATCC 38163 / CBS 112.46 / NRRL 194 / M139) (Aspergillus nidulans).